The chain runs to 494 residues: Probable 26S proteasome non-ATPase regulatory subunit 3 (494 aa).

Residues 247–426 form the PCI domain; that stretch reads ARFLYYLGRI…NFMRSKESTD (180 aa). The disordered stretch occupies residues 458–494; sequence PPKSYGKDLESAEERREREQQDLELAKEMAEDDEDGF. Residues 462–486 show a composition bias toward basic and acidic residues; the sequence is YGKDLESAEERREREQQDLELAKEM.

It belongs to the proteasome subunit S3 family. In terms of assembly, the 26S proteasome is composed of a core protease, known as the 20S proteasome, capped at one or both ends by the 19S regulatory complex (RC). The RC is composed of at least 18 different subunits in two subcomplexes, the base and the lid, which form the portions proximal and distal to the 20S proteolytic core, respectively. In terms of tissue distribution, blood (crystal) cells and cuticle.

In terms of biological role, acts as a regulatory subunit of the 26 proteasome which is involved in the ATP-dependent degradation of ubiquitinated proteins. This is Probable 26S proteasome non-ATPase regulatory subunit 3 (Rpn3) from Drosophila melanogaster (Fruit fly).